The primary structure comprises 322 residues: MEKKLAILTSGGDAPGMNAAIRATAKIAEYYGFEVYGIRRGYLGMLNDEIFPMTGRFVSGIIDKGGTVLLTARSEEFKEARFREIAANNLKKKGINYLVVIGGDGSYRGANLLYKEHGIKVVGIPGTIDNDICGTDFTLGFDTCLNTILDAMSKIRDTATSHERTILIQVMGRRAGDLALHACIAGGGDGIMIPEMDNPIEMLALQLKERRKNGKLHDIVLVAEGVGNVLDIEEKLKGHINSEIRSVVLGHIQRGGTPSGFDRVLASRMAAKAVEVLNKGEAGVMVGIEKNEMVTHPLEEACSVDKRKSIEKDYELALLLSK.

Residue G12 participates in ATP binding. 22–26 provides a ligand contact to ADP; that stretch reads RATAK. ATP is bound by residues 73 to 74 and 103 to 106; these read RS and GDGS. Position 104 (D104) interacts with Mg(2+). A substrate-binding site is contributed by 127 to 129; sequence TID. The active-site Proton acceptor is the D129. R156 is a binding site for ADP. Residues R164 and 171–173 each bind substrate; that span reads MGR. Residues 187–189 and 215–217 contribute to the ADP site; these read GGD and KLH. Substrate contacts are provided by residues E224, R245, and 251–254; that span reads HIQR.

Belongs to the phosphofructokinase type A (PFKA) family. ATP-dependent PFK group I subfamily. Prokaryotic clade 'B1' sub-subfamily. As to quaternary structure, homotetramer. Mg(2+) is required as a cofactor.

The protein localises to the cytoplasm. It catalyses the reaction beta-D-fructose 6-phosphate + ATP = beta-D-fructose 1,6-bisphosphate + ADP + H(+). It participates in carbohydrate degradation; glycolysis; D-glyceraldehyde 3-phosphate and glycerone phosphate from D-glucose: step 3/4. With respect to regulation, allosterically activated by ADP and other diphosphonucleosides, and allosterically inhibited by phosphoenolpyruvate. Its function is as follows. Catalyzes the phosphorylation of D-fructose 6-phosphate to fructose 1,6-bisphosphate by ATP, the first committing step of glycolysis. This is ATP-dependent 6-phosphofructokinase from Fusobacterium nucleatum subsp. nucleatum (strain ATCC 25586 / DSM 15643 / BCRC 10681 / CIP 101130 / JCM 8532 / KCTC 2640 / LMG 13131 / VPI 4355).